Consider the following 208-residue polypeptide: Intraflagellar transport protein 43 homolog (208 aa).

N-acetylmethionine is present on Met-1. The tract at residues 18-65 is disordered; sequence SRAKMGRRAQQESAQAENHLNGKNSSLTLTGETSSAKLPRCRQGGWAG. Residues 28 to 53 are compositionally biased toward polar residues; that stretch reads QESAQAENHLNGKNSSLTLTGETSSA. Ser-78 is modified (phosphoserine).

This sequence belongs to the IFT43 family. Component of the IFT complex A (IFT-A) complex. IFT-A complex is divided into a core subcomplex composed of IFT122:IFT140:WDR19 which is associated with TULP3 and a peripheral subcomplex composed of IFT43:WDR35:TTC21B. Interacts directy with IFT122, WDR35 and TTC21B. As to expression, expressed in the retina, predominantly in the photoreceptor outer segment.

It localises to the cytoplasm. The protein localises to the cytoskeleton. Its subcellular location is the cell projection. The protein resides in the cilium. Its function is as follows. As a component of IFT complex A (IFT-A), a complex required for retrograde ciliary transport and entry into cilia of G protein-coupled receptors (GPCRs), it is involved in ciliogenesis. Involved in retrograde ciliary transport along microtubules from the ciliary tip to the base. The polypeptide is Intraflagellar transport protein 43 homolog (Homo sapiens (Human)).